The following is a 331-amino-acid chain: 2-hydroxyacid dehydrogenase homolog (331 aa).

NAD(+)-binding positions include 154-155 (KI), 232-234 (TSR), and Asp-258. Arg-234 is a catalytic residue. Glu-263 is a catalytic residue. The Proton donor role is filled by His-295. 295–298 (HQAF) provides a ligand contact to NAD(+).

Belongs to the D-isomer specific 2-hydroxyacid dehydrogenase family.

This Haemophilus influenzae (strain ATCC 51907 / DSM 11121 / KW20 / Rd) protein is 2-hydroxyacid dehydrogenase homolog (ddh).